Reading from the N-terminus, the 419-residue chain is Acyl-coenzyme A thioesterase 1 (419 aa).

Residues serine 232, aspartate 324, and histidine 358 each act as charge relay system in the active site. Serine 416 bears the Phosphoserine mark.

This sequence belongs to the C/M/P thioester hydrolase family. As to quaternary structure, monomer. As to expression, expressed in liver.

Its subcellular location is the cytoplasm. It is found in the cytosol. It carries out the reaction hexadecanoyl-CoA + H2O = hexadecanoate + CoA + H(+). It catalyses the reaction dodecanoyl-CoA + H2O = dodecanoate + CoA + H(+). The catalysed reaction is tetradecanoyl-CoA + H2O = tetradecanoate + CoA + H(+). The enzyme catalyses decanoyl-CoA + H2O = decanoate + CoA + H(+). It carries out the reaction octadecanoyl-CoA + H2O = octadecanoate + CoA + H(+). It catalyses the reaction eicosanoyl-CoA + H2O = eicosanoate + CoA + H(+). The catalysed reaction is (9Z)-octadecenoyl-CoA + H2O = (9Z)-octadecenoate + CoA + H(+). The enzyme catalyses (9Z)-hexadecenoyl-CoA + H2O = (9Z)-hexadecenoate + CoA + H(+). It carries out the reaction (9E)-octadecenoyl-CoA + H2O = (9E)-octadecenoate + CoA + H(+). It participates in lipid metabolism; fatty acid metabolism. Its function is as follows. Catalyzes the hydrolysis of acyl-CoAs into free fatty acids and coenzyme A (CoASH), regulating their respective intracellular levels. More active towards saturated and unsaturated long chain fatty acyl-CoAs (C12-C20). The protein is Acyl-coenzyme A thioesterase 1 (Acot1) of Rattus norvegicus (Rat).